Here is a 444-residue protein sequence, read N- to C-terminus: Phosphomethylpyrimidine synthase (444 aa).

Substrate-binding positions include Asn80, Met109, Tyr138, His174, 194–196, 235–238, and Glu274; these read SRG and DSLR. Position 278 (His278) interacts with Zn(2+). Tyr301 is a substrate binding site. His342 contacts Zn(2+). Residues Cys422, Cys425, and Cys430 each contribute to the [4Fe-4S] cluster site.

Belongs to the ThiC family. As to quaternary structure, homodimer. [4Fe-4S] cluster serves as cofactor.

The enzyme catalyses 5-amino-1-(5-phospho-beta-D-ribosyl)imidazole + S-adenosyl-L-methionine = 4-amino-2-methyl-5-(phosphooxymethyl)pyrimidine + CO + 5'-deoxyadenosine + formate + L-methionine + 3 H(+). Its pathway is cofactor biosynthesis; thiamine diphosphate biosynthesis. Catalyzes the synthesis of the hydroxymethylpyrimidine phosphate (HMP-P) moiety of thiamine from aminoimidazole ribotide (AIR) in a radical S-adenosyl-L-methionine (SAM)-dependent reaction. The polypeptide is Phosphomethylpyrimidine synthase (Nitratiruptor sp. (strain SB155-2)).